Consider the following 206-residue polypeptide: Emopamil-binding protein-like (206 aa).

The next 4 membrane-spanning stretches (helical) occupy residues 10 to 30 (EAGS…ALGL), 42 to 62 (WVLA…GAFV), 101 to 121 (LEIL…YAIV), and 165 to 185 (LWVY…LLLW). The 146-residue stretch at 39 to 184 (VERWVLAWLC…LWVLIPGLLL (146 aa)) folds into the EXPERA domain.

The protein belongs to the EBP family. Homodimer.

Its subcellular location is the endoplasmic reticulum membrane. Its function is as follows. Does not possess sterol isomerase activity and does not bind sigma ligands. The protein is Emopamil-binding protein-like (Ebpl) of Mus musculus (Mouse).